Here is a 310-residue protein sequence, read N- to C-terminus: Quinolinate synthase 2 (310 aa).

Iminosuccinate contacts are provided by His-30 and Ser-47. Cys-92 provides a ligand contact to [4Fe-4S] cluster. Iminosuccinate is bound by residues 118–120 (YVN) and Ser-135. Cys-177 serves as a coordination point for [4Fe-4S] cluster. Iminosuccinate contacts are provided by residues 203 to 205 (HPE) and Thr-220. Residue Cys-265 participates in [4Fe-4S] cluster binding.

The protein belongs to the quinolinate synthase family. Type 2 subfamily. It depends on [4Fe-4S] cluster as a cofactor.

It is found in the cytoplasm. The catalysed reaction is iminosuccinate + dihydroxyacetone phosphate = quinolinate + phosphate + 2 H2O + H(+). It functions in the pathway cofactor biosynthesis; NAD(+) biosynthesis; quinolinate from iminoaspartate: step 1/1. Catalyzes the condensation of iminoaspartate with dihydroxyacetone phosphate to form quinolinate. The chain is Quinolinate synthase 2 from Methanosarcina acetivorans (strain ATCC 35395 / DSM 2834 / JCM 12185 / C2A).